Consider the following 444-residue polypeptide: Elongation factor 1-alpha (444 aa).

A tr-type G domain is found at 15–236; the sequence is KPHLNLAVIG…ALDTFQPPPR (222 aa). Residues 24 to 31 are G1; that stretch reads GHVDNGKS. Residue 24-31 coordinates GTP; that stretch reads GHVDNGKS. Ser-31 is a binding site for Mg(2+). The interval 80–84 is G2; that stretch reads GVTIE. A G3 region spans residues 101–104; sequence DLPG. Residues 101–105 and 163–166 contribute to the GTP site; these read DLPGH and NKMD. The tract at residues 163-166 is G4; sequence NKMD. A G5 region spans residues 202 to 204; sequence SAI.

This sequence belongs to the TRAFAC class translation factor GTPase superfamily. Classic translation factor GTPase family. EF-Tu/EF-1A subfamily.

It is found in the cytoplasm. It catalyses the reaction GTP + H2O = GDP + phosphate + H(+). GTP hydrolase that promotes the GTP-dependent binding of aminoacyl-tRNA to the A-site of ribosomes during protein biosynthesis. This is Elongation factor 1-alpha from Pyrobaculum islandicum (strain DSM 4184 / JCM 9189 / GEO3).